Reading from the N-terminus, the 354-residue chain is Rhodopsin (354 aa).

Residues methionine 1–alanine 36 lie on the Extracellular side of the membrane. N-linked (GlcNAc...) asparagine glycans are attached at residues asparagine 2 and asparagine 15. Residues tyrosine 37–valine 61 traverse the membrane as a helical segment. Residues threonine 62–asparagine 73 lie on the Cytoplasmic side of the membrane. The chain crosses the membrane as a helical span at residues tyrosine 74–tyrosine 96. Over threonine 97 to cysteine 110 the chain is Extracellular. Cysteines 110 and 187 form a disulfide. The helical transmembrane segment at asparagine 111–valine 133 threads the bilayer. Positions glutamate 134–tryptophan 136 match the 'Ionic lock' involved in activated form stabilization motif. The Cytoplasmic segment spans residues glutamate 134–histidine 152. A helical membrane pass occupies residues alanine 153–leucine 173. Topologically, residues glycine 174 to serine 202 are extracellular. Residues phenylalanine 203–glycine 224 form a helical membrane-spanning segment. Residues arginine 225–arginine 252 lie on the Cytoplasmic side of the membrane. A helical transmembrane segment spans residues methionine 253–tyrosine 274. Topologically, residues isoleucine 275 to leucine 286 are extracellular. The helical transmembrane segment at phenylalanine 287–cysteine 308 threads the bilayer. Lysine 296 carries the N6-(retinylidene)lysine modification. At methionine 309–alanine 354 the chain is on the cytoplasmic side. Residues cysteine 322 and cysteine 323 are each lipidated (S-palmitoyl cysteine). Positions glycine 333–alanine 354 are disordered. A compositionally biased stretch (low complexity) spans alanine 334 to alanine 354.

Belongs to the G-protein coupled receptor 1 family. Opsin subfamily. Post-translationally, phosphorylated on some or all of the serine and threonine residues present in the C-terminal region. In terms of processing, contains one covalently linked retinal chromophore.

The protein resides in the membrane. It localises to the cell projection. Its subcellular location is the cilium. It is found in the photoreceptor outer segment. Its function is as follows. Photoreceptor required for image-forming vision at low light intensity. While most salt water fish species use retinal as chromophore, most freshwater fish use 3-dehydroretinal, or a mixture of retinal and 3-dehydroretinal. Light-induced isomerization of 11-cis to all-trans retinal triggers a conformational change that activates signaling via G-proteins. Subsequent receptor phosphorylation mediates displacement of the bound G-protein alpha subunit by arrestin and terminates signaling. In Poecilia reticulata (Guppy), this protein is Rhodopsin (rho).